We begin with the raw amino-acid sequence, 303 residues long: Probable 5-dehydro-4-deoxyglucarate dehydratase (303 aa).

Belongs to the DapA family.

The enzyme catalyses 5-dehydro-4-deoxy-D-glucarate + H(+) = 2,5-dioxopentanoate + CO2 + H2O. It participates in carbohydrate acid metabolism; D-glucarate degradation; 2,5-dioxopentanoate from D-glucarate: step 2/2. The chain is Probable 5-dehydro-4-deoxyglucarate dehydratase from Pseudomonas putida (strain ATCC 700007 / DSM 6899 / JCM 31910 / BCRC 17059 / LMG 24140 / F1).